The chain runs to 229 residues: Peroxiredoxin-like 2A (229 aa).

Residues 14-112 (MWSIGVGAFG…DELGVPLYAV (99 aa)) form a thioredoxin fold region. Active-site redox-active residues include Cys85 and Cys88.

Belongs to the peroxiredoxin-like PRXL2 family. PRXL2A subfamily. As to expression, expressed by the principal cells of the epididymis. Detected in the head region of epididymal sperm (at protein level). Expressed in bone marrow.

The protein resides in the cytoplasm. It is found in the secreted. Functionally, involved in redox regulation of the cell. Acts as an antioxidant. Inhibits TNFSF11-induced NFKB1 and JUN activation and osteoclast differentiation. May affect bone resorption and help to maintain bone mass. Acts as a negative regulator of macrophage-mediated inflammation by inhibiting macrophage production of inflammatory cytokines, probably through suppression of the MAPK signaling pathway. In Rattus norvegicus (Rat), this protein is Peroxiredoxin-like 2A.